Here is a 480-residue protein sequence, read N- to C-terminus: Adenosylhomocysteinase (480 aa).

Positions 63, 142, and 203 each coordinate substrate. Residue 204 to 206 (TTT) coordinates NAD(+). 2 residues coordinate substrate: Lys-233 and Asp-237. NAD(+) contacts are provided by residues Asn-238, 267–272 (GYGDVG), Glu-290, Asn-325, 346–348 (IGH), and Asn-394.

This sequence belongs to the adenosylhomocysteinase family. Requires NAD(+) as cofactor.

The protein resides in the cytoplasm. It carries out the reaction S-adenosyl-L-homocysteine + H2O = L-homocysteine + adenosine. The protein operates within amino-acid biosynthesis; L-homocysteine biosynthesis; L-homocysteine from S-adenosyl-L-homocysteine: step 1/1. Its function is as follows. May play a key role in the regulation of the intracellular concentration of adenosylhomocysteine. The protein is Adenosylhomocysteinase of Xanthomonas campestris pv. campestris (strain 8004).